The chain runs to 317 residues: Beta-ketoacyl-[acyl-carrier-protein] synthase III (317 aa).

Catalysis depends on residues cysteine 112 and histidine 244. An ACP-binding region spans residues 245–249 (QANLR). Asparagine 274 is an active-site residue.

This sequence belongs to the thiolase-like superfamily. FabH family. In terms of assembly, homodimer.

It localises to the cytoplasm. The enzyme catalyses malonyl-[ACP] + acetyl-CoA + H(+) = 3-oxobutanoyl-[ACP] + CO2 + CoA. It functions in the pathway lipid metabolism; fatty acid biosynthesis. Functionally, catalyzes the condensation reaction of fatty acid synthesis by the addition to an acyl acceptor of two carbons from malonyl-ACP. Catalyzes the first condensation reaction which initiates fatty acid synthesis and may therefore play a role in governing the total rate of fatty acid production. Possesses both acetoacetyl-ACP synthase and acetyl transacylase activities. Its substrate specificity determines the biosynthesis of branched-chain and/or straight-chain of fatty acids. The chain is Beta-ketoacyl-[acyl-carrier-protein] synthase III from Sodalis glossinidius (strain morsitans).